Consider the following 346-residue polypeptide: tRNA N6-adenosine threonylcarbamoyltransferase (346 aa).

Positions 110 and 114 each coordinate Fe cation. Substrate contacts are provided by residues 132-136 (LLSGG), Asp-165, Gly-178, and Asn-274. Asp-298 is a Fe cation binding site.

This sequence belongs to the KAE1 / TsaD family. Fe(2+) is required as a cofactor.

Its subcellular location is the cytoplasm. The enzyme catalyses L-threonylcarbamoyladenylate + adenosine(37) in tRNA = N(6)-L-threonylcarbamoyladenosine(37) in tRNA + AMP + H(+). Required for the formation of a threonylcarbamoyl group on adenosine at position 37 (t(6)A37) in tRNAs that read codons beginning with adenine. Is involved in the transfer of the threonylcarbamoyl moiety of threonylcarbamoyl-AMP (TC-AMP) to the N6 group of A37, together with TsaE and TsaB. TsaD likely plays a direct catalytic role in this reaction. The protein is tRNA N6-adenosine threonylcarbamoyltransferase of Borreliella burgdorferi (strain ZS7) (Borrelia burgdorferi).